Here is a 305-residue protein sequence, read N- to C-terminus: Phosphoinositol dihydroceramide synthase (305 aa).

Residues 1-23 (MPSKKETLTVIVIMALFLLLTAA) form the signal peptide. A lipid anchor (N-palmitoyl cysteine) is attached at cysteine 24. Residue cysteine 24 is the site of S-diacylglycerol cysteine attachment. Helical transmembrane passes span 41-61 (LFFA…FAIF), 117-137 (VFAG…GLCL), 149-169 (FALV…IHPA), 216-236 (FAAV…YAII), 241-261 (WYVI…AIYS), and 266-286 (IIDV…FEYG).

The protein localises to the membrane. It catalyses the reaction N-(2-hydroxy-fatty acyl)-dihydroceramide + a 1,2-diacyl-sn-glycero-3-phospho-(1D-myo-inositol) = inositol-1-phospho-N-(2-hydroxy-fatty acyl)-dihydroceramide + a 1,2-diacyl-sn-glycerol. Functionally, catalyzes the addition of a phosphorylinositol group onto dihydroceramide to form phosphoinositol dihydroceramide (PI-DHC), an essential step in sphingolipid biosynthesis. This is Phosphoinositol dihydroceramide synthase from Bacteroides thetaiotaomicron (strain ATCC 29148 / DSM 2079 / JCM 5827 / CCUG 10774 / NCTC 10582 / VPI-5482 / E50).